A 141-amino-acid polypeptide reads, in one-letter code: Large ribosomal subunit protein uL11 (141 aa).

This sequence belongs to the universal ribosomal protein uL11 family. As to quaternary structure, part of the ribosomal stalk of the 50S ribosomal subunit. Interacts with L10 and the large rRNA to form the base of the stalk. L10 forms an elongated spine to which L12 dimers bind in a sequential fashion forming a multimeric L10(L12)X complex. In terms of processing, one or more lysine residues are methylated.

In terms of biological role, forms part of the ribosomal stalk which helps the ribosome interact with GTP-bound translation factors. This is Large ribosomal subunit protein uL11 from Chlamydia abortus (strain DSM 27085 / S26/3) (Chlamydophila abortus).